We begin with the raw amino-acid sequence, 153 residues long: Arachidonate 5-lipoxygenase-activating protein (153 aa).

Topologically, residues 1-8 (MDQEAVGN) are lumenal. A helical membrane pass occupies residues 9–30 (VVLLAIVTLISVVQNGFFAHKV). Residues 31-52 (EHESRNQNGRSFQRTGTLAFER) are Cytoplasmic-facing. A helical membrane pass occupies residues 53-77 (VYTANQNCVDAYPTFLAVLWTAGLL). The Lumenal portion of the chain corresponds to 78 to 80 (CSQ). A helical transmembrane segment spans residues 81-102 (VPAAFAGLMYLFVRQKYFVGYL). Residues 103–107 (GERTQ) are Cytoplasmic-facing. An intramembrane segment occupies 108 to 115 (STPGYIFG). A helical membrane pass occupies residues 116 to 128 (KRIILFLFLMSLA). The Lumenal segment spans residues 129–153 (GILNYCLILLFGSDFENYIKTISTT).

It belongs to the MAPEG family. As to quaternary structure, homotrimer. Interacts with LTC4S and ALOX5.

Its subcellular location is the nucleus membrane. The protein localises to the endoplasmic reticulum membrane. Required for leukotriene biosynthesis by ALOX5 (5-lipoxygenase). Anchors ALOX5 to the membrane. Binds arachidonic acid, and could play an essential role in the transfer of arachidonic acid to ALOX5. Binds to MK-886, a compound that blocks the biosynthesis of leukotrienes. The chain is Arachidonate 5-lipoxygenase-activating protein (ALOX5AP) from Oryctolagus cuniculus (Rabbit).